A 405-amino-acid chain; its full sequence is Glucan 1,3-beta-glucosidase A (405 aa).

The N-terminal stretch at 1 to 14 (MLPLLLCIVPYCWS) is a signal peptide. Glu-199 functions as the Proton donor in the catalytic mechanism. Disulfide bonds link Cys-280/Cys-405 and Cys-306/Cys-332. Catalysis depends on Glu-298, which acts as the Nucleophile.

It belongs to the glycosyl hydrolase 5 (cellulase A) family. As to quaternary structure, monomer. Requires Mn(2+) as cofactor.

It localises to the secreted. The enzyme catalyses Successive hydrolysis of beta-D-glucose units from the non-reducing ends of (1-&gt;3)-beta-D-glucans, releasing alpha-glucose.. Its function is as follows. Beta-glucanases participate in the metabolism of beta-glucan, the main structural component of the cell wall. It could also function biosynthetically as a transglycosylase. This is Glucan 1,3-beta-glucosidase A (exgA) from Aspergillus oryzae (strain ATCC 42149 / RIB 40) (Yellow koji mold).